Consider the following 152-residue polypeptide: Biotin carboxyl carrier protein of acetyl-CoA carboxylase (152 aa).

Positions 72-148 constitute a Biotinyl-binding domain; it reads IIDILSPISG…TKNQVLMKII (77 aa). Lys114 is subject to N6-biotinyllysine.

The protein resides in the plastid. It is found in the chloroplast. It participates in lipid metabolism; fatty acid biosynthesis. Functionally, this protein is a component of the acetyl coenzyme A carboxylase complex; first, biotin carboxylase catalyzes the carboxylation of the carrier protein and then the transcarboxylase transfers the carboxyl group to form malonyl-CoA. The sequence is that of Biotin carboxyl carrier protein of acetyl-CoA carboxylase (accB) from Cyanidium caldarium (Red alga).